Here is a 396-residue protein sequence, read N- to C-terminus: Elongation factor Tu 1 (396 aa).

Residues 10–206 enclose the tr-type G domain; sequence KPHINVGTIG…VLDSYIPEPQ (197 aa). The interval 19–26 is G1; the sequence is GHVDHGKT. 19 to 26 provides a ligand contact to GTP; the sequence is GHVDHGKT. Residue Thr-26 participates in Mg(2+) binding. Residues 60–64 are G2; that stretch reads GITIN. Residues 81 to 84 form a G3 region; that stretch reads DCPG. GTP is bound by residues 81-85 and 136-139; these read DCPGH and NKAD. Residues 136–139 are G4; sequence NKAD. The interval 174 to 176 is G5; the sequence is SAL.

Belongs to the TRAFAC class translation factor GTPase superfamily. Classic translation factor GTPase family. EF-Tu/EF-1A subfamily. Monomer.

Its subcellular location is the cytoplasm. The enzyme catalyses GTP + H2O = GDP + phosphate + H(+). Functionally, GTP hydrolase that promotes the GTP-dependent binding of aminoacyl-tRNA to the A-site of ribosomes during protein biosynthesis. The protein is Elongation factor Tu 1 of Nitrosomonas eutropha (strain DSM 101675 / C91 / Nm57).